Reading from the N-terminus, the 171-residue chain is Secreted protein CSS3 (171 aa).

Positions 1-20 (MVPLFGLFCIFSQLYSLCSA) are cleaved as a signal peptide. 3 N-linked (GlcNAc...) asparagine glycosylation sites follow: Asn37, Asn139, and Asn159.

The protein localises to the cytoplasm. It is found in the secreted. This is Secreted protein CSS3 from Saccharomyces cerevisiae (strain ATCC 204508 / S288c) (Baker's yeast).